We begin with the raw amino-acid sequence, 152 residues long: UPF0266 membrane protein YobD (152 aa).

Helical transmembrane passes span 6 to 26 (LVLILFIAALLAYALYDQFIM), 45 to 65 (VDSVIFVGLVAILIYNNVTSH), and 67 to 87 (AQMTTWLLSALALMGFYIFWI).

Belongs to the UPF0266 family.

It is found in the cell inner membrane. The polypeptide is UPF0266 membrane protein YobD (Salmonella agona (strain SL483)).